Consider the following 1193-residue polypeptide: DNA polymerase (1193 aa).

A disordered region spans residues 1–88 (MALVQTHGSR…PAKKKRGTVV (88 aa)). The segment covering 48–68 (PATTASGSRAAPTARRASSPP) has biased composition (low complexity).

The protein belongs to the DNA polymerase type-B family. In terms of assembly, heterodimer with the terminal protein; this heterodimer binds to bp 9 to 18 of the genome. Forms a complex with viral pTP, DBP and hosts NFIA and POU2F1/OCT1 for initiation of replication.

The protein localises to the host nucleus. It carries out the reaction DNA(n) + a 2'-deoxyribonucleoside 5'-triphosphate = DNA(n+1) + diphosphate. Its function is as follows. Eukaryotic-type DNA polymerase involved in viral genomic replication. DNA synthesis is protein primed, and acts in a strand displacement replication. Assembles in complex with viral pTP, DBP, host NFIA and host POU2F1/OCT1 on viral origin of replication. The polymerase covalently transfers dCMP onto pTP, thereby initiating complementary strand synthesis. The polypeptide is DNA polymerase (Homo sapiens (Human)).